The sequence spans 3414 residues: Hemocyanin 1 (3414 aa).

Residues 1–16 (MLSVRLLIVVLALANA) form the signal peptide. Residue E17 coordinates a divalent metal cation. The functional unit a (wall) stretch occupies residues 17-437 (ENLVRKSVEH…PPVKHHQSAN (421 aa)). Cu cation is bound at residue H58. Residues C64 and C73 are joined by a disulfide bond. The 2'-(S-cysteinyl)-histidine (Cys-His) cross-link spans 74–76 (CIH). Residues H76, H85, H195, H199, and H226 each contribute to the Cu cation site. A disulfide bond links C185 and C252. Residues 287–290 (CELH) constitute a cross-link (2'-(S-cysteinyl)-histidine (Cys-His)). Residues C339 and C351 are joined by a disulfide bond. N403 carries an N-linked (GlcNAc...) asparagine glycan. The segment at 438–851 (LLVRKNINDL…RVKFDKVPRS (414 aa)) is functional unit b (wall). H478 is a Cu cation binding site. Residues C484 and C495 are joined by a disulfide bond. Positions 496–498 (CVH) form a cross-link, 2'-(S-cysteinyl)-histidine (Cys-His). H498 and H507 together coordinate Cu cation. N-linked (GlcNAc...) asparagine glycosylation is present at N545. A disulfide bridge links C608 with C674. Residues H618, H622, and H649 each coordinate Cu cation. The stretch at 628-669 (SEHFSMSSLHYTAFDPLFYFHHSNVDRLWAVWQALQMRRHKP) is one WD 1 repeat. E737 is an a divalent metal cation binding site. The functional unit c (wall) stretch occupies residues 852 to 1271 (RLIRKNVDRL…EVYQAEVTSA (420 aa)). A Cu cation-binding site is contributed by H892. C898 and C909 are disulfide-bonded. The segment at residues 910–912 (CVH) is a cross-link (2'-(S-cysteinyl)-histidine (Cys-His)). Cu cation-binding residues include H912, H921, H1031, H1035, and H1062. Disulfide bonds link C1021–C1088 and C1178–C1184. The stretch at 1041–1082 (AQPYGMASLRYTAFDPLFYLHHSNTDRIWAIWQALQKYRGKP) is one WD 2 repeat. The functional unit d (wall) stretch occupies residues 1272 to 1680 (NRIRKNIENL…AHTDDGHTEP (409 aa)). H1309 serves as a coordination point for Cu cation. The cysteines at positions 1315 and 1324 are disulfide-linked. A cross-link (2'-(S-cysteinyl)-histidine (Cys-His)) is located at residues 1325 to 1327 (CVH). Positions 1327, 1336, 1440, 1444, and 1471 each coordinate Cu cation. 2 cysteine pairs are disulfide-bonded: C1430–C1497 and C1585–C1595. Residues 1450–1491 (KGKYSMSNLDYAAFDPVFFLHHATTDRIWAIWQDLQRFRKRP) form a WD 3 repeat. N1648 carries an N-linked (GlcNAc...) asparagine glycan. The tract at residues 1681 to 2097 (VMIRKDITQL…HDISSHHLSL (417 aa)) is functional unit e (wall). H1721 provides a ligand contact to Cu cation. C1727 and C1738 are disulfide-bonded. The segment at residues 1739–1741 (CVH) is a cross-link (2'-(S-cysteinyl)-histidine (Cys-His)). Positions 1741, 1750, 1863, 1867, and 1894 each coordinate Cu cation. Cystine bridges form between C1853/C1920 and C2009/C2015. A WD 4 repeat occupies 1873–1914 (KEPYGIGHLHYASYDPLFYIHHSQTDRIWAIWQSLQRFRGLS). The functional unit f (wall) stretch occupies residues 2098–2517 (NKVRHDLSTL…EDHHSSSMAG (420 aa)). H2138 is a binding site for Cu cation. C2144 and C2154 are disulfide-bonded. N2145 is a glycosylation site (N-linked (GlcNAc...) asparagine). Positions 2155–2157 (CIH) form a cross-link, 2'-(S-cysteinyl)-histidine (Cys-His). H2157, H2166, H2276, H2280, and H2307 together coordinate Cu cation. The stretch at 2163-2199 (PHWHRLYTLQFEQALRRHGSSVAVPYWDWTKPIHNIP) is one WD 5 repeat. Disulfide bonds link C2266/C2333 and C2420/C2426. E2424 contributes to the a divalent metal cation binding site. The tract at residues 2518-2921 (HGVRKEINTL…EKHHEDHHED (404 aa)) is functional unit g (internal arc). Residue H2558 coordinates Cu cation. Cysteines 2564 and 2574 form a disulfide. N-linked (GlcNAc...) asparagine glycosylation is present at N2571. Positions 2575–2577 (CTH) form a cross-link, 2'-(S-cysteinyl)-histidine (Cys-His). H2577, H2586, H2686, H2690, and H2717 together coordinate Cu cation. Disulfide bonds link C2676–C2743 and C2830–C2836. Residues 2696 to 2737 (LTPYGMSTLEYTTYDPLFWLHHANTDRIWAIWQALQEYRGLP) form a WD 6 repeat. The tract at residues 2922-3414 (ILVRKNIHSL…LRIHVHVDDE (493 aa)) is functional unit h (internal slab). H2962 serves as a coordination point for Cu cation. An intrachain disulfide couples C2968 to C2978. The segment at residues 2979 to 2981 (CVH) is a cross-link (2'-(S-cysteinyl)-histidine (Cys-His)). Cu cation is bound by residues H2981, H2990, H3091, H3095, and H3122. Cysteines 3081 and 3148 form a disulfide. The WD 7 repeat unit spans residues 3101–3142 (AEKYSMSTLEYSAFDPYFMIHHASLDKIWIIWQELQKRRVKP). An N-linked (GlcNAc...) asparagine glycan is attached at N3278. A disulfide bridge connects residues C3367 and C3400.

Belongs to the tyrosinase family. Hemocyanin subfamily. In terms of assembly, homo-didecamer, with two decamers assembled face-to-face at their open ends. This didecamer form a stable 25 nM cylinder wall. In terms of processing, probably N-glycosylated. Asn-1280 and Asn-2484 are buried deeply in the protein which make them inaccessible for sugar attachment. Asn-3278 N-glycan is likely to represent a diantennate carbohydrate tree. The didecamer is almost evenly tagged by a total of 120 sugar trees. Hemolymph.

Its subcellular location is the secreted. It localises to the extracellular space. In terms of biological role, hemocyanins are copper-containing oxygen carriers occurring freely dissolved in the hemolymph of many mollusks and arthropods. The polypeptide is Hemocyanin 1 (Megathura crenulata (Giant keyhole limpet)).